Consider the following 38-residue polypeptide: Cytochrome b6-f complex subunit 5 (38 aa).

The helical transmembrane segment at 5–25 (LVLGLVMGLVPITLAGLFVAA) threads the bilayer.

Belongs to the PetG family. The 4 large subunits of the cytochrome b6-f complex are cytochrome b6, subunit IV (17 kDa polypeptide, PetD), cytochrome f and the Rieske protein, while the 4 small subunits are PetG, PetL, PetM and PetN. The complex functions as a dimer.

The protein resides in the cellular thylakoid membrane. Its function is as follows. Component of the cytochrome b6-f complex, which mediates electron transfer between photosystem II (PSII) and photosystem I (PSI), cyclic electron flow around PSI, and state transitions. PetG is required for either the stability or assembly of the cytochrome b6-f complex. In Gloeothece citriformis (strain PCC 7424) (Cyanothece sp. (strain PCC 7424)), this protein is Cytochrome b6-f complex subunit 5.